We begin with the raw amino-acid sequence, 185 residues long: Photosystem I assembly protein Ycf4 (185 aa).

The next 2 membrane-spanning stretches (helical) occupy residues Asn21 to Tyr43 and Phe68 to Ser90.

This sequence belongs to the Ycf4 family.

It is found in the plastid. Its subcellular location is the chloroplast thylakoid membrane. Seems to be required for the assembly of the photosystem I complex. The chain is Photosystem I assembly protein Ycf4 from Aegilops tauschii (Tausch's goatgrass).